The primary structure comprises 344 residues: tRNA dimethylallyltransferase (344 aa).

19–26 (GPTASGKT) lines the ATP pocket. 21 to 26 (TASGKT) is a binding site for substrate.

It belongs to the IPP transferase family. As to quaternary structure, monomer. The cofactor is Mg(2+).

It catalyses the reaction adenosine(37) in tRNA + dimethylallyl diphosphate = N(6)-dimethylallyladenosine(37) in tRNA + diphosphate. Functionally, catalyzes the transfer of a dimethylallyl group onto the adenine at position 37 in tRNAs that read codons beginning with uridine, leading to the formation of N6-(dimethylallyl)adenosine (i(6)A). In Bifidobacterium animalis subsp. lactis (strain AD011), this protein is tRNA dimethylallyltransferase.